We begin with the raw amino-acid sequence, 38 residues long: MKVQASVKKRCEHCKIIRRKKRVYVICKVNPKHNQKQG.

It belongs to the bacterial ribosomal protein bL36 family.

This chain is Large ribosomal subunit protein bL36, found in Thermotoga maritima (strain ATCC 43589 / DSM 3109 / JCM 10099 / NBRC 100826 / MSB8).